A 48-amino-acid chain; its full sequence is uncharacterized protein (48 aa).

The protein belongs to the ELIP/psbS family.

It is found in the plastid. The protein localises to the chloroplast. Its function is as follows. Possible role in chlorophyll and/or carotenoid binding. This is an uncharacterized protein from Porphyra purpurea (Red seaweed).